The following is a 629-amino-acid chain: tRNA uridine 5-carboxymethylaminomethyl modification enzyme MnmG (629 aa).

FAD-binding positions include 14–19 (GAGHAG), V126, and S181. 273–287 (GPRYCPSIEDKVVRF) is an NAD(+) binding site. Q370 is a binding site for FAD.

This sequence belongs to the MnmG family. As to quaternary structure, homodimer. Heterotetramer of two MnmE and two MnmG subunits. FAD serves as cofactor.

It is found in the cytoplasm. In terms of biological role, NAD-binding protein involved in the addition of a carboxymethylaminomethyl (cmnm) group at the wobble position (U34) of certain tRNAs, forming tRNA-cmnm(5)s(2)U34. The sequence is that of tRNA uridine 5-carboxymethylaminomethyl modification enzyme MnmG from Bacillus cereus (strain ATCC 10987 / NRS 248).